Here is a 218-residue protein sequence, read N- to C-terminus: Superoxide dismutase [Mn] 2, mitochondrial (218 aa).

The transit peptide at 1-24 (MLQSTARTASKLVQPVAGVLAVRS) directs the protein to the mitochondrion. Positions 50, 98, 179, and 183 each coordinate Mn(2+).

This sequence belongs to the iron/manganese superoxide dismutase family. In terms of assembly, homotetramer. The cofactor is Mn(2+). Expressed in pharynx and rectum. Upon thermal stress, expressed in vulva, body wall muscles and hypodermis.

Its subcellular location is the mitochondrion. The enzyme catalyses 2 superoxide + 2 H(+) = H2O2 + O2. Destroys superoxide anion radicals which are normally produced within the cells and which are toxic to biological systems. This is Superoxide dismutase [Mn] 2, mitochondrial (sod-3) from Caenorhabditis elegans.